A 359-amino-acid polypeptide reads, in one-letter code: Fe-S cluster assembly protein DRE2 (359 aa).

An N-terminal SAM-like domain region spans residues 1–159 (MANILLLLHP…LFKKLSSNSN (159 aa)). A disordered region spans residues 152 to 187 (KKLSSNSNNNNNSSSPIGLTDSSAANTDEETDEANV). Residues 155 to 166 (SSNSNNNNNSSS) are compositionally biased toward low complexity. The tract at residues 159 to 228 (NNNNNSSSPI…DDLIKDSNQL (70 aa)) is linker. Residues 167 to 177 (PIGLTDSSAAN) are compositionally biased toward polar residues. Positions 240, 252, 255, and 257 each coordinate [2Fe-2S] cluster. Residues 240–257 (CEIPNGKKRRKACKDCTC) form a fe-S binding site A region. Positions 322, 325, 333, and 336 each coordinate [4Fe-4S] cluster. 2 short sequence motifs (cx2C motif) span residues 322–325 (CGSC) and 333–336 (CDGC). The fe-S binding site B stretch occupies residues 322 to 336 (CGSCALGDAFRCDGC).

Belongs to the anamorsin family. Monomer. Interacts with TAH18. Interacts with MIA40. The cofactor is [2Fe-2S] cluster. [4Fe-4S] cluster serves as cofactor.

The protein resides in the cytoplasm. Its subcellular location is the mitochondrion intermembrane space. Its function is as follows. Component of the cytosolic iron-sulfur (Fe-S) protein assembly (CIA) machinery required for the maturation of extramitochondrial Fe-S proteins. Part of an electron transfer chain functioning in an early step of cytosolic Fe-S biogenesis, facilitating the de novo assembly of a [4Fe-4S] cluster on the scaffold complex CFD1-NBP35. Electrons are transferred to DRE2 from NADPH via the FAD- and FMN-containing protein TAH18. TAH18-DRE2 are also required for the assembly of the diferric tyrosyl radical cofactor of ribonucleotide reductase (RNR), probably by providing electrons for reduction during radical cofactor maturation in the catalytic small subunit RNR2. The polypeptide is Fe-S cluster assembly protein DRE2 (Scheffersomyces stipitis (strain ATCC 58785 / CBS 6054 / NBRC 10063 / NRRL Y-11545) (Yeast)).